The sequence spans 1344 residues: Xanthine dehydrogenase (1344 aa).

The 88-residue stretch at 9 to 96 folds into the 2Fe-2S ferredoxin-type domain; it reads SVLVFFVNGK…GCAVTTVEGI (88 aa). 8 residues coordinate [2Fe-2S] cluster: Cys48, Cys53, Cys56, Cys78, Cys118, Cys121, Cys153, and Cys155. The FAD-binding PCMH-type domain occupies 236–425; that stretch reads FSSERVTWYR…LGIHFQKTTP (190 aa). FAD-binding positions include 264 to 271, Phe344, 354 to 358, Asp367, Leu415, and Lys433; these read LVVGNTEV and CLGGN. Positions 781 and 812 each coordinate Mo-molybdopterin. Substrate-binding residues include Glu816 and Arg894. Arg926 lines the Mo-molybdopterin pocket. Residue Phe928 participates in substrate binding. Ala1093 serves as a coordination point for Mo-molybdopterin. Glu1276 acts as the Proton acceptor in catalysis.

It belongs to the xanthine dehydrogenase family. As to quaternary structure, homodimer. FAD serves as cofactor. Requires Mo-molybdopterin as cofactor. [2Fe-2S] cluster is required as a cofactor.

The protein resides in the peroxisome. The enzyme catalyses xanthine + NAD(+) + H2O = urate + NADH + H(+). It carries out the reaction hypoxanthine + NAD(+) + H2O = xanthine + NADH + H(+). In terms of biological role, key enzyme in purine degradation. Catalyzes the oxidation of hypoxanthine to xanthine. Catalyzes the oxidation of xanthine to uric acid. The protein is Xanthine dehydrogenase (Xdh) of Drosophila subobscura (Fruit fly).